The sequence spans 420 residues: Glutamate-1-semialdehyde 2,1-aminomutase (420 aa).

The residue at position 259 (lysine 259) is an N6-(pyridoxal phosphate)lysine.

The protein belongs to the class-III pyridoxal-phosphate-dependent aminotransferase family. HemL subfamily. Pyridoxal 5'-phosphate is required as a cofactor.

The protein localises to the cytoplasm. It catalyses the reaction (S)-4-amino-5-oxopentanoate = 5-aminolevulinate. It functions in the pathway porphyrin-containing compound metabolism; protoporphyrin-IX biosynthesis; 5-aminolevulinate from L-glutamyl-tRNA(Glu): step 2/2. In Sulfolobus acidocaldarius (strain ATCC 33909 / DSM 639 / JCM 8929 / NBRC 15157 / NCIMB 11770), this protein is Glutamate-1-semialdehyde 2,1-aminomutase.